The chain runs to 153 residues: Transcriptional repressor NrdR (153 aa).

Residues 3–34 (CPYCNADDTKVIDSRLAAEGAQVRRRRQCNQC) fold into a zinc finger. Residues 49 to 139 (PRIIKSNGRI…VYRDFQDIEA (91 aa)) enclose the ATP-cone domain.

This sequence belongs to the NrdR family. The cofactor is Zn(2+).

Negatively regulates transcription of bacterial ribonucleotide reductase nrd genes and operons by binding to NrdR-boxes. The chain is Transcriptional repressor NrdR from Psychrobacter sp. (strain PRwf-1).